The following is a 285-amino-acid chain: Malonyl-[acyl-carrier protein] O-methyltransferase (285 aa).

It belongs to the methyltransferase superfamily.

It carries out the reaction malonyl-[ACP] + S-adenosyl-L-methionine = malonyl-[ACP] methyl ester + S-adenosyl-L-homocysteine. It functions in the pathway cofactor biosynthesis; biotin biosynthesis. Functionally, converts the free carboxyl group of a malonyl-thioester to its methyl ester by transfer of a methyl group from S-adenosyl-L-methionine (SAM). It allows to synthesize pimeloyl-ACP via the fatty acid synthetic pathway. The sequence is that of Malonyl-[acyl-carrier protein] O-methyltransferase from Bacillus cytotoxicus (strain DSM 22905 / CIP 110041 / 391-98 / NVH 391-98).